We begin with the raw amino-acid sequence, 430 residues long: tRNA(Ile)-lysidine synthase (430 aa).

Residue 21–26 (SGGLDS) coordinates ATP.

Belongs to the tRNA(Ile)-lysidine synthase family.

It localises to the cytoplasm. It catalyses the reaction cytidine(34) in tRNA(Ile2) + L-lysine + ATP = lysidine(34) in tRNA(Ile2) + AMP + diphosphate + H(+). Its function is as follows. Ligates lysine onto the cytidine present at position 34 of the AUA codon-specific tRNA(Ile) that contains the anticodon CAU, in an ATP-dependent manner. Cytidine is converted to lysidine, thus changing the amino acid specificity of the tRNA from methionine to isoleucine. The polypeptide is tRNA(Ile)-lysidine synthase (Salmonella heidelberg (strain SL476)).